A 286-amino-acid chain; its full sequence is 33 kDa chaperonin (286 aa).

Disulfide bonds link Cys225–Cys227 and Cys258–Cys261.

It belongs to the HSP33 family. Under oxidizing conditions two disulfide bonds are formed involving the reactive cysteines. Under reducing conditions zinc is bound to the reactive cysteines and the protein is inactive.

It localises to the cytoplasm. In terms of biological role, redox regulated molecular chaperone. Protects both thermally unfolding and oxidatively damaged proteins from irreversible aggregation. Plays an important role in the bacterial defense system toward oxidative stress. This is 33 kDa chaperonin from Shewanella woodyi (strain ATCC 51908 / MS32).